Consider the following 185-residue polypeptide: Ribosome-recycling factor (185 aa).

Belongs to the RRF family.

It localises to the cytoplasm. Responsible for the release of ribosomes from messenger RNA at the termination of protein biosynthesis. May increase the efficiency of translation by recycling ribosomes from one round of translation to another. The protein is Ribosome-recycling factor of Clostridioides difficile (strain 630) (Peptoclostridium difficile).